Consider the following 342-residue polypeptide: Ferrochelatase (342 aa).

Fe cation is bound by residues histidine 188 and glutamate 268.

The protein belongs to the ferrochelatase family.

Its subcellular location is the cytoplasm. The enzyme catalyses heme b + 2 H(+) = protoporphyrin IX + Fe(2+). Its pathway is porphyrin-containing compound metabolism; protoheme biosynthesis; protoheme from protoporphyrin-IX: step 1/1. Its function is as follows. Catalyzes the ferrous insertion into protoporphyrin IX. This is Ferrochelatase from Rickettsia conorii (strain ATCC VR-613 / Malish 7).